Reading from the N-terminus, the 1396-residue chain is Helicase ARIP4 (1396 aa).

The segment at 1-103 (MSDASISGSE…LQKPANLRRN (103 aa)) is disordered. A compositionally biased stretch (acidic residues) spans 11–49 (PELDPEDMEEEEEDDEDDDEEEEEEEDEEDNDGDDEDDK). The segment covering 75–84 (RSTTSGQSGQ) has biased composition (polar residues). Residues 290 to 510 (RFSGSSGFGC…WCMVDFVRPD (221 aa)) enclose the Helicase ATP-binding domain. Position 303 to 310 (303 to 310 (HSMGLGKT)) interacts with ATP. The short motif at 461 to 464 (DEGH) is the DEAH box element. An LXXLL motif 1 motif is present at residues 549-553 (LHSLL). A Helicase C-terminal domain is found at 717 to 891 (KMVLLFHLIE…RVVDDLNPEV (175 aa)). Disordered stretches follow at residues 1117-1168 (SGKQ…PDSP) and 1194-1250 (NLGL…STMN). Polar residues-rich tracts occupy residues 1128 to 1148 (QATS…RHST) and 1218 to 1238 (DQSS…SYPN). Residues 1273-1277 (LPSLL) carry the LXXLL motif 2 motif. The tract at residues 1340 to 1396 (GLPTNNPASTFPGYLSSHSNYQASPGTSSRPLPSGETELGSCEEDGRDDDVVEVTGE) is disordered. Over residues 1355-1370 (SSHSNYQASPGTSSRP) the composition is skewed to polar residues. Residues 1380–1396 (SCEEDGRDDDVVEVTGE) show a composition bias toward acidic residues.

This sequence belongs to the SNF2/RAD54 helicase family.

It localises to the nucleus. It carries out the reaction ATP + H2O = ADP + phosphate + H(+). DNA helicase that modulates androgen receptor (AR)-dependent transactivation in a promoter-dependent manner. The chain is Helicase ARIP4 (rad54l2) from Xenopus tropicalis (Western clawed frog).